The sequence spans 69 residues: Guanine nucleotide-binding protein subunit gamma (69 aa).

Serine 2 carries the post-translational modification N-acetylserine. The residue at position 66 (cysteine 66) is a Cysteine methyl ester. The S-geranylgeranyl cysteine moiety is linked to residue cysteine 66. A propeptide spans 67–69 (SVL) (removed in mature form).

It belongs to the G protein gamma family. G proteins are composed of 3 units, alpha, beta and gamma. Interacts with gpbA, and this requires phlp1. This protein is thought to be subject to lipidation, and this requires phlp1.

The protein resides in the cell membrane. Functionally, guanine nucleotide-binding proteins (G proteins) are involved as a modulator or transducer in various transmembrane signaling systems. This major G-protein of the squid photoreceptor is involved in visual transduction. The beta and gamma chains are required for the GTPase activity, for replacement of GDP by GTP, and for G protein-effector interaction. Required for normal chemotaxis in response to cAMP. In Dictyostelium discoideum (Social amoeba), this protein is Guanine nucleotide-binding protein subunit gamma (gpgA).